The primary structure comprises 283 residues: Phosphatidylserine decarboxylase proenzyme (283 aa).

Catalysis depends on charge relay system; for autoendoproteolytic cleavage activity residues Asp90, His143, and Ser248. The active-site Schiff-base intermediate with substrate; via pyruvic acid; for decarboxylase activity is Ser248. The residue at position 248 (Ser248) is a Pyruvic acid (Ser); by autocatalysis.

The protein belongs to the phosphatidylserine decarboxylase family. PSD-B subfamily. Prokaryotic type I sub-subfamily. As to quaternary structure, heterodimer of a large membrane-associated beta subunit and a small pyruvoyl-containing alpha subunit. Pyruvate serves as cofactor. Is synthesized initially as an inactive proenzyme. Formation of the active enzyme involves a self-maturation process in which the active site pyruvoyl group is generated from an internal serine residue via an autocatalytic post-translational modification. Two non-identical subunits are generated from the proenzyme in this reaction, and the pyruvate is formed at the N-terminus of the alpha chain, which is derived from the carboxyl end of the proenzyme. The autoendoproteolytic cleavage occurs by a canonical serine protease mechanism, in which the side chain hydroxyl group of the serine supplies its oxygen atom to form the C-terminus of the beta chain, while the remainder of the serine residue undergoes an oxidative deamination to produce ammonia and the pyruvoyl prosthetic group on the alpha chain. During this reaction, the Ser that is part of the protease active site of the proenzyme becomes the pyruvoyl prosthetic group, which constitutes an essential element of the active site of the mature decarboxylase.

Its subcellular location is the cell membrane. It catalyses the reaction a 1,2-diacyl-sn-glycero-3-phospho-L-serine + H(+) = a 1,2-diacyl-sn-glycero-3-phosphoethanolamine + CO2. It functions in the pathway phospholipid metabolism; phosphatidylethanolamine biosynthesis; phosphatidylethanolamine from CDP-diacylglycerol: step 2/2. Functionally, catalyzes the formation of phosphatidylethanolamine (PtdEtn) from phosphatidylserine (PtdSer). This Francisella tularensis subsp. mediasiatica (strain FSC147) protein is Phosphatidylserine decarboxylase proenzyme.